The sequence spans 199 residues: uncharacterized protein (199 aa).

A run of 7 helical transmembrane segments spans residues 10 to 32, 37 to 59, 63 to 80, 83 to 100, 104 to 121, 126 to 148, and 163 to 185; these read LTSQ…FIGY, VYSA…INYY, LIVI…FALI, LGLI…GVYL, YQVY…INLF, LTVL…MGIT, and FDAI…TGII.

Its subcellular location is the cell membrane. This is an uncharacterized protein from Archaeoglobus fulgidus (strain ATCC 49558 / DSM 4304 / JCM 9628 / NBRC 100126 / VC-16).